The sequence spans 396 residues: Putative T-box protein 39 (396 aa).

The segment at residues 11 to 192 (MAEEDRWKQW…KNSTYGNRLD (182 aa)) is a DNA-binding region (T-box). A disordered region spans residues 185-215 (STYGNRLDGGNKRKNTDSSEERTSKRSKNET). Basic and acidic residues predominate over residues 193-215 (GGNKRKNTDSSEERTSKRSKNET).

It localises to the nucleus. This chain is Putative T-box protein 39 (tbx-39), found in Caenorhabditis elegans.